The primary structure comprises 390 residues: Glucose-fructose oxidoreductase domain-containing protein 1 (390 aa).

An N-terminal signal peptide occupies residues 1–21 (MLPGVGVFGTSLTARVIIPLL).

This sequence belongs to the Gfo/Idh/MocA family. As to quaternary structure, homodimer. Interacts with NKIRAS2.

Its subcellular location is the secreted. In terms of biological role, probably catalytically inactive enzyme. Does not bind NAD or NADP. This is Glucose-fructose oxidoreductase domain-containing protein 1 (Gfod1) from Mus musculus (Mouse).